The following is a 249-amino-acid chain: Large ribosomal subunit protein uL22m (249 aa).

A mitochondrion-targeting transit peptide spans 1 to 22 (MKYINQFMKISKGFLVPSSTIG). Residues 70-98 (ANQKDDSNRQQKEERVKERPRSRISFKKQ) are disordered. Residues 72–98 (QKDDSNRQQKEERVKERPRSRISFKKQ) show a composition bias toward basic and acidic residues.

The protein belongs to the universal ribosomal protein uL22 family. Component of the mitochondrial large ribosomal subunit (mt-LSU). Mature yeast 74S mitochondrial ribosomes consist of a small (37S) and a large (54S) subunit. The 37S small subunit contains a 15S ribosomal RNA (15S mt-rRNA) and at least 32 different proteins. The 54S large subunit contains a 21S rRNA (21S mt-rRNA) and at least 45 different proteins. uL22m forms the wall of the exit tunnel.

The protein resides in the mitochondrion. Functionally, component of the mitochondrial ribosome (mitoribosome), a dedicated translation machinery responsible for the synthesis of mitochondrial genome-encoded proteins, including at least some of the essential transmembrane subunits of the mitochondrial respiratory chain. The mitoribosomes are attached to the mitochondrial inner membrane and translation products are cotranslationally integrated into the membrane. This is Large ribosomal subunit protein uL22m (mrpl22) from Schizosaccharomyces pombe (strain 972 / ATCC 24843) (Fission yeast).